The chain runs to 733 residues: Protein OBERON 3 (733 aa).

Residues 1–15 show a composition bias toward basic and acidic residues; sequence MIGEKDLAGDGECSR. 2 disordered regions span residues 1–42 and 118–142; these read MIGE…YHQK and NPNS…KKSN. The segment covering 21–30 has biased composition (polar residues); the sequence is PRFSNLNNQT. Residues 120–153 are a coiled coil; that stretch reads NSSKRKAHEEEEEAEEEEDKKSNKIETLNLSLAL. A PHD-type zinc finger spans residues 436–500; it reads SCMCPVCLRF…MFHCIGCAHK (65 aa). The tract at residues 592–614 is disordered; that stretch reads VAAETSYRKDEASVTPSTSKDQK. Positions 644-733 form a coiled coil; the sequence is MFQKKADEAR…RMEVTRQQLV (90 aa).

Self-interacts. Interacts with OBE1 and OBE2. Interacts with OBE4.

The protein resides in the nucleus. Probable transcription factor that functions redundantly with OBE4 in specification of the hypophysis and establishment of the embryonic root. Involved in the activation of ARF5/MP-dependent gene expression during embryonic root meristem initiation. Involved in shoot meristem homeostasis. This is Protein OBERON 3 from Arabidopsis thaliana (Mouse-ear cress).